Consider the following 202-residue polypeptide: Small ribosomal subunit protein uS4c (202 aa).

One can recognise an S4 RNA-binding domain in the interval 90 to 152 (MRLDNVIFRL…RKSESIINKN (63 aa)).

Belongs to the universal ribosomal protein uS4 family. Part of the 30S ribosomal subunit. Contacts protein S5. The interaction surface between S4 and S5 is involved in control of translational fidelity.

The protein localises to the plastid. It is found in the chloroplast. In terms of biological role, one of the primary rRNA binding proteins, it binds directly to 16S rRNA where it nucleates assembly of the body of the 30S subunit. Its function is as follows. With S5 and S12 plays an important role in translational accuracy. The chain is Small ribosomal subunit protein uS4c (rps4) from Dendrohypopterygium filiculiforme (Moss).